The chain runs to 78 residues: U5-ctenitoxin-Pk1a (78 aa).

Disulfide bonds link C6-C23, C13-C29, C20-C52, C22-C40, C31-C38, C58-C73, and C69-C77.

Expressed by the venom gland.

Its subcellular location is the secreted. Functionally, lethal neurotoxin. Causes spastic paralysis and death in mice in 4-6 minutes after intracerebroventricular injection at dose levels of 1.5 ug per mouse. This Phoneutria keyserlingi (Brazilian wandering spider) protein is U5-ctenitoxin-Pk1a.